The sequence spans 258 residues: Tryptophan synthase alpha chain (258 aa).

Catalysis depends on proton acceptor residues Glu-52 and Asp-63.

This sequence belongs to the TrpA family. As to quaternary structure, tetramer of two alpha and two beta chains.

The catalysed reaction is (1S,2R)-1-C-(indol-3-yl)glycerol 3-phosphate + L-serine = D-glyceraldehyde 3-phosphate + L-tryptophan + H2O. The protein operates within amino-acid biosynthesis; L-tryptophan biosynthesis; L-tryptophan from chorismate: step 5/5. Functionally, the alpha subunit is responsible for the aldol cleavage of indoleglycerol phosphate to indole and glyceraldehyde 3-phosphate. In Streptococcus pneumoniae serotype 4 (strain ATCC BAA-334 / TIGR4), this protein is Tryptophan synthase alpha chain.